Reading from the N-terminus, the 387-residue chain is Cysteine desulfurase IscS (387 aa).

Residues 73–74, Asn155, Gln183, and 203–205 each bind pyridoxal 5'-phosphate; these read AT and SAH. An N6-(pyridoxal phosphate)lysine modification is found at Lys206. Thr241 lines the pyridoxal 5'-phosphate pocket. Cys328 (cysteine persulfide intermediate) is an active-site residue. Cys328 provides a ligand contact to [2Fe-2S] cluster.

Belongs to the class-V pyridoxal-phosphate-dependent aminotransferase family. NifS/IscS subfamily. In terms of assembly, homodimer. Forms a heterotetramer with IscU, interacts with other sulfur acceptors. Pyridoxal 5'-phosphate serves as cofactor.

Its subcellular location is the cytoplasm. The catalysed reaction is (sulfur carrier)-H + L-cysteine = (sulfur carrier)-SH + L-alanine. Its pathway is cofactor biosynthesis; iron-sulfur cluster biosynthesis. Its function is as follows. Master enzyme that delivers sulfur to a number of partners involved in Fe-S cluster assembly, tRNA modification or cofactor biosynthesis. Catalyzes the removal of elemental sulfur atoms from cysteine to produce alanine. Functions as a sulfur delivery protein for Fe-S cluster synthesis onto IscU, an Fe-S scaffold assembly protein, as well as other S acceptor proteins. This is Cysteine desulfurase IscS from Helicobacter pylori (strain J99 / ATCC 700824) (Campylobacter pylori J99).